We begin with the raw amino-acid sequence, 447 residues long: MANVIVIGAQWGDEGKGKITDLLSRSADVVVRYQGGVNAGHTIVVKGQTFKLHLIPSGILYPDTECMIGCGTVIDPQVLIKELDQLESLNISTKNLLISETAHVTMPYHRLIDKASEERRGSHKIGTTGRGIGPTYADKSERTGIRVLDLMDPAALRDQLEWTINNKNVILEKLYNLPPLDTEEVIQEYIGYAERLRPHVVDTSLKIYDAIQRRRNILFEGAQGTLLDLDHGTYPYVTSSNPVAGGACVGTGLGPTMIDRVIGVSKAYTTRVGEGPFPTELHGELGELLCDRGAEFGTTTGRKRRCGWFDAVIGRYAVRINGMDCMAITKLDVLDELEEIQVCIAYEIDGDRCDHFPTSARQFARCRPIYKTVPGWQVPTSECRTLEDLPQQALDYLKFLAELMEVPIAIVSLGASRDQTIIVEDPIHGPKRALLHPDGTPASLLSA.

GTP is bound by residues 12–18 (GDEGKGK) and 40–42 (GHT). Asp-13 serves as the catalytic Proton acceptor. Asp-13 and Gly-40 together coordinate Mg(2+). Residues 13 to 16 (DEGK), 38 to 41 (NAGH), Thr-128, Arg-142, Gln-223, Thr-238, and Arg-302 contribute to the IMP site. His-41 (proton donor) is an active-site residue. Substrate is bound at residue 298-304 (TTTGRKR). GTP contacts are provided by residues Arg-304, 330 to 332 (KLD), and 412 to 414 (SLG).

This sequence belongs to the adenylosuccinate synthetase family. As to quaternary structure, homodimer. Requires Mg(2+) as cofactor.

It is found in the cytoplasm. The catalysed reaction is IMP + L-aspartate + GTP = N(6)-(1,2-dicarboxyethyl)-AMP + GDP + phosphate + 2 H(+). Its pathway is purine metabolism; AMP biosynthesis via de novo pathway; AMP from IMP: step 1/2. Plays an important role in the de novo pathway of purine nucleotide biosynthesis. Catalyzes the first committed step in the biosynthesis of AMP from IMP. In Nostoc sp. (strain PCC 7120 / SAG 25.82 / UTEX 2576), this protein is Adenylosuccinate synthetase.